The following is a 94-amino-acid chain: ESAT-6-like protein EsxI (94 aa).

The protein belongs to the WXG100 family. ESAT-6 subfamily.

The protein localises to the secreted. The chain is ESAT-6-like protein EsxI from Mycobacterium tuberculosis (strain CDC 1551 / Oshkosh).